Here is a 131-residue protein sequence, read N- to C-terminus: Arsenate reductase (131 aa).

Residues cysteine 10, cysteine 82, and cysteine 89 each act as nucleophile in the active site. Disulfide bonds link cysteine 10/cysteine 82 and cysteine 82/cysteine 89.

The protein belongs to the low molecular weight phosphotyrosine protein phosphatase family. Thioredoxin-coupled ArsC subfamily.

The protein localises to the cytoplasm. It catalyses the reaction arsenate + [thioredoxin]-dithiol + H(+) = arsenite + [thioredoxin]-disulfide + H2O. Catalyzes the reduction of arsenate [As(V)] to arsenite [As(III)]. The chain is Arsenate reductase from Staphylococcus xylosus.